The chain runs to 335 residues: Glucose-dependent insulinotropic receptor (335 aa).

The Extracellular segment spans residues 1 to 12 (MESSFSFGVILA). Residues 13–33 (VLASLIIATNTLVAVAVLLLI) traverse the membrane as a helical segment. At 34 to 37 (HKND) the chain is on the cytoplasmic side. Residues 38–58 (GVSLCFTLNLAVADTLIGVAI) form a helical membrane-spanning segment. The Extracellular portion of the chain corresponds to 59–81 (SGLLTDQLSSPSRPTQKTLCSLR). The chain crosses the membrane as a helical span at residues 82-102 (MAFVTSSAAASVLTVMLITFD). Topologically, residues 103 to 125 (RYLAIKQPFRYLKIMSGFVAGAC) are cytoplasmic. A helical transmembrane segment spans residues 126–146 (IAGLWLVSYLIGFLPLGIPMF). The Extracellular segment spans residues 147-164 (QQTAYKGQCSFFAVFHPH). A helical membrane pass occupies residues 165-185 (FVLTLSCVGFFPAMLLFVFFY). The Cytoplasmic segment spans residues 186–226 (CDMLKIASMHSQQIRKMEHAGAMAGGYRSPRTPSDFKALRT). The helical transmembrane segment at 227-247 (VSVLIGSFALSWTPFLITGIV) threads the bilayer. Residues 248–262 (QVACQECHLYLVLER) lie on the Extracellular side of the membrane. A helical membrane pass occupies residues 263-283 (YLWLLGVGNSLLNPLIYAYWQ). At 284–335 (KEVRLQLYHMALGVKKVLTSFLLFLSARNCGPERPRESSCHIVTISSSEFDG) the chain is on the cytoplasmic side.

This sequence belongs to the G-protein coupled receptor 1 family. In terms of tissue distribution, predominantly expressed in the pancreas, especially in the islets.

Its subcellular location is the cell membrane. Receptor for the endogenous fatty-acid ethanolamide oleoylethanolamide (OEA) and lysophosphatidylcholine (LPC). Functions as a glucose-dependent insulinotropic receptor. The activity of this receptor is mediated by G proteins which activate adenylate cyclase. Seems to act through a G(s) mediated pathway. The polypeptide is Glucose-dependent insulinotropic receptor (GPR119) (Homo sapiens (Human)).